Here is a 383-residue protein sequence, read N- to C-terminus: Cytochrome b (383 aa).

The next 4 helical transmembrane spans lie at 35 to 55, 79 to 100, 115 to 135, and 180 to 200; these read FGSI…ILSM, WLFR…YIHI, WGIG…GYVL, and FFSL…LHLF. Heme b-binding residues include histidine 85 and histidine 99. Heme b-binding residues include histidine 184 and histidine 198. Histidine 203 is a binding site for a ubiquinone. 4 consecutive transmembrane segments (helical) span residues 228–248, 290–310, 321–341, and 348–368; these read IKDL…NFQF, LGGV…IFYN, LNKI…WLGK, and FTNI…LNFY.

The protein belongs to the cytochrome b family. As to quaternary structure, the main subunits of complex b-c1 are: cytochrome b, cytochrome c1 and the Rieske protein. Heme b is required as a cofactor.

It is found in the mitochondrion inner membrane. In terms of biological role, component of the ubiquinol-cytochrome c reductase complex (complex III or cytochrome b-c1 complex) that is part of the mitochondrial respiratory chain. The b-c1 complex mediates electron transfer from ubiquinol to cytochrome c. Contributes to the generation of a proton gradient across the mitochondrial membrane that is then used for ATP synthesis. The polypeptide is Cytochrome b (MT-CYB) (Apis mellifera ligustica (Common honeybee)).